Reading from the N-terminus, the 233-residue chain is Esterase FUS5 (233 aa).

Catalysis depends on charge relay system residues serine 105, aspartate 159, and histidine 187.

It belongs to the LovG family.

In terms of biological role, esterase; part of the gene cluster that mediates the biosynthesis of the mycotoxin fusarin C. Within the cluster, FUS1, FUS2, FUS8 and FUS9 are sufficient for fusarin production. The other FUS cluster members are not essential for fusarin C biosynthesis. This Gibberella moniliformis (strain M3125 / FGSC 7600) (Maize ear and stalk rot fungus) protein is Esterase FUS5.